The sequence spans 1164 residues: Shugoshin 2A (1164 aa).

The stretch at 62–113 (LSKEKENSRRITTEKMQLQKEVEKLNFENTFLRLKLNTLNKKLVEIESHVSN) forms a coiled coil. 5 disordered regions span residues 160–269 (SEND…VTMR), 287–314 (HQPT…NTQR), 390–492 (RKVK…PFSR), 521–541 (TFVI…DKDT), and 917–992 (PLDS…ETHG). Residues 182–198 (SKTSPDSTSSVSRQPSS) show a composition bias toward low complexity. 2 stretches are compositionally biased toward polar residues: residues 238-247 (DQSPKSSLSE) and 288-299 (QPTSSPGSNWNN). The span at 390–412 (RKVKGASSDKKRESSKRECKDGS) shows a compositional bias: basic and acidic residues. Over residues 443 to 472 (CISSTEQPSQVNTQKKRTLQNSSDQENIQN) the composition is skewed to polar residues. Basic and acidic residues predominate over residues 525–541 (RKSEKDNLFPNQEDKDT). Residues 934–948 (GEQTNLPKMQKQSAG) are compositionally biased toward polar residues. A Phosphoserine modification is found at S1042. A disordered region spans residues 1092 to 1164 (ITTGTRNPHH…EPSLRSKMRR (73 aa)). A compositionally biased stretch (low complexity) spans 1112-1125 (TSLVLVDTSSVSDT). The segment covering 1126–1140 (NPANPENESEGQSSH) has biased composition (polar residues).

Belongs to the shugoshin family. As to quaternary structure, part of an astrin (SPAG5)-kinastrin (SKAP) complex containing KNSTRN, SPAG5, PLK1, DYNLL1 and SGO2A. Interacts with CDCA8. Interacts with PPP2CA. Ubiquitously expressed in proliferating cells. Highly expressed in the testis and oocytes.

The protein resides in the nucleus. It is found in the chromosome. It localises to the centromere. The protein localises to the kinetochore. Functionally, cooperates with PPP2CA to protect centromeric cohesin from separase-mediated cleavage in oocytes specifically during meiosis I. Has a crucial role in protecting REC8 at centromeres from cleavage by separase. During meiosis, protects centromeric cohesion complexes until metaphase II/anaphase II transition, preventing premature release of meiosis-specific REC8 cohesin complexes from anaphase I centromeres. Is thus essential for an accurate gametogenesis. May act by targeting PPP2CA to centromeres, thus leading to cohesin dephosphorylation. Essential for recruiting KIF2C to the inner centromere and for correcting defective kinetochore attachments. Involved in centromeric enrichment of AUKRB in prometaphase. This Mus musculus (Mouse) protein is Shugoshin 2A.